The following is a 252-amino-acid chain: Probable NADP-dependent dehydrogenase HI_1430 (252 aa).

NADP(+) is bound at residue 7–31; the sequence is LVTGATAGFGLAICKKLIEAGYKVI. Ser-137 lines the substrate pocket. Tyr-150 (proton acceptor) is an active-site residue.

It belongs to the short-chain dehydrogenases/reductases (SDR) family.

This chain is Probable NADP-dependent dehydrogenase HI_1430, found in Haemophilus influenzae (strain ATCC 51907 / DSM 11121 / KW20 / Rd).